Reading from the N-terminus, the 1077-residue chain is Teashirt homolog 1 (1077 aa).

Disordered regions lie at residues 1 to 109 (MPRR…VSYP), 139 to 195 (SGST…SSSS), and 269 to 298 (GHYRDDNRDKDSEKTKRWSKPRKRSLMEME). A compositionally biased stretch (acidic residues) spans 26–36 (IDEEHVEDDGL). 2 stretches are compositionally biased toward polar residues: residues 57–71 (QSYQNSPVSSATNQD) and 139–152 (SGSTTSTNDASQKE). Positions 164-195 (PVSTTGPTTSTPSTSCSSSTSHSSTTSTSSSS) are enriched in low complexity. 2 C2H2-type zinc fingers span residues 246–270 (FRCKDCSAAYDTLVELTVHMNETGH) and 307–331 (LKCMYCGHSFESLQDLSVHMIKTKH). Residues 269-284 (GHYRDDNRDKDSEKTK) show a composition bias toward basic and acidic residues. The segment at 416–440 (LKCMECGSSHDTLQQLTAHMMVTGH) adopts a C2H2-type 3; atypical zinc-finger fold. Disordered stretches follow at residues 467–549 (SIPL…KGGL) and 647–720 (TGKV…EPLK). 3 stretches are compositionally biased toward basic and acidic residues: residues 496 to 528 (SEEKKEPEKEKPPVAGDAEKIKEESEDSLEKFE), 647 to 665 (TGKVNIKKEERPPEKEKSS), and 675 to 708 (KENKDFPKTEEVSGKPQKKGPEAETGKAKKEGPL). The residue at position 765 (Ser-765) is a Phosphoserine. Residues 848-873 (TGRLTPKSSTPSTVSEKSDADGSSFE) are disordered. Residues 853-862 (PKSSTPSTVS) show a composition bias toward polar residues. The homeobox; atypical DNA-binding region spans 885–955 (RKGRQSNWNP…NVKYQLRRTG (71 aa)). C2H2-type zinc fingers lie at residues 970–992 (FFCNDCASQFRTASTYISHLETH) and 1037–1060 (FQCKLCNRTFASKHAVKLHLSKTH).

It belongs to the teashirt C2H2-type zinc-finger protein family. As to quaternary structure, interacts (via homeobox domain) with APBB1 (via PID domain 1). As to expression, expressed in brain; strongly reduced in post-mortem elderly subjects with Alzheimer disease.

Its subcellular location is the nucleus. Functionally, probable transcriptional regulator involved in developmental processes. May act as a transcriptional repressor (Potential). The chain is Teashirt homolog 1 (TSHZ1) from Homo sapiens (Human).